The primary structure comprises 1666 residues: Atrochrysone carboxylic acid synthase PKS4 (1666 aa).

The Ketosynthase family 3 (KS3) domain occupies 15-452 (FEPIAIVGIG…GNAGFMVIEE (438 aa)). Active-site for beta-ketoacyl synthase activity residues include cysteine 194, histidine 332, and histidine 372. Residues 555–863 (AFCFSGQGGE…WMTALDALMR (309 aa)) form a malonyl-CoA:ACP transacylase (MAT) domain region. Serine 632 functions as the For acyl/malonyl transferase activity in the catalytic mechanism. Residues 905–1034 (REVKASSTML…EQDLLESLSL (130 aa)) form an N-terminal hotdog fold region. Residues 905-1206 (REVKASSTML…MAKMKIYVLK (302 aa)) enclose the PKS/mFAS DH domain. The segment at 935–1203 (LLNHVMAGYT…DVRMAKMKIY (269 aa)) is product template (PT) domain. Residues 1050–1206 (STDVLRKELA…MAKMKIYVLK (157 aa)) are C-terminal hotdog fold. O-(pantetheine 4'-phosphoryl)serine is present on serine 1269. One can recognise a Carrier domain in the interval 1331–1395 (ATSPSLPIMP…TSTEPSQTLV (65 aa)). Residues 1334–1397 (PSLPIMPNGV…TEPSQTLVAN (64 aa)) are proline-rich linker region. Residues 1444 to 1529 (TVIGIHCPGL…PPGVVGLTAQ (86 aa)) form an alpha/beta hydrolase superfamily-type thioesterase (TE) domain region.

The enzyme catalyses holo-[ACP] + 8 malonyl-CoA + 8 H(+) = atrochrysone carboxyl-[ACP] + 8 CO2 + 8 CoA + 2 H2O. It participates in secondary metabolite biosynthesis. Its function is as follows. Non-reducing polyketide synthase that synthesizes the universal anthraquinone precursor atrochrysone carboxylic acid from malonyl-CoA. Produces a mixture of both 3R and 3S enantiomers with an excess of the 3S form. PKS4 catalyzes both hepta- and octaketide synthesis and also yields 6-hydroxymusizin, probably via carboxylating activity inherent to the KS domain. The protein is Atrochrysone carboxylic acid synthase PKS4 of Calonarius odorifer (Mushroom).